Here is a 371-residue protein sequence, read N- to C-terminus: Large ribosomal subunit protein bL27m (371 aa).

The N-terminal 27 residues, 1–27 (MWNPILLDTSSFSFQKHVSGVFLQVRN), are a transit peptide targeting the mitochondrion.

Belongs to the bacterial ribosomal protein bL27 family. As to quaternary structure, component of the mitochondrial large ribosomal subunit (mt-LSU). Mature yeast 74S mitochondrial ribosomes consist of a small (37S) and a large (54S) subunit. The 37S small subunit contains a 15S ribosomal RNA (15S mt-rRNA) and 34 different proteins. The 54S large subunit contains a 21S rRNA (21S mt-rRNA) and 46 different proteins.

Its subcellular location is the mitochondrion. Its function is as follows. Component of the mitochondrial ribosome (mitoribosome), a dedicated translation machinery responsible for the synthesis of mitochondrial genome-encoded proteins, including at least some of the essential transmembrane subunits of the mitochondrial respiratory chain. The mitoribosomes are attached to the mitochondrial inner membrane and translation products are cotranslationally integrated into the membrane. The chain is Large ribosomal subunit protein bL27m (MRP7) from Saccharomyces cerevisiae (strain ATCC 204508 / S288c) (Baker's yeast).